The chain runs to 269 residues: F-box protein At5g52880 (269 aa).

The F-box domain maps to 109 to 155 (DIDIPSLPQDILIHIFSFLEISSLVSSAQVSRSWNQATHENSLWQSQ).

This Arabidopsis thaliana (Mouse-ear cress) protein is F-box protein At5g52880.